A 133-amino-acid chain; its full sequence is Oocytes ribonuclease (133 aa).

A signal peptide spans 1–22 (MCAKSLLLVFGILLGLSHLSLS). Q23 bears the Pyrrolidone carboxylic acid mark. The active-site Proton acceptor is H32. Intrachain disulfides connect C41–C93, C56–C103, C74–C118, and C115–C132. 57 to 61 (KRVNT) serves as a coordination point for substrate. Residue H125 is the Proton donor of the active site.

Belongs to the pancreatic ribonuclease family. In terms of assembly, monomer.

The protein localises to the secreted. In terms of biological role, preferentially cleaves single-stranded RNA at pyrimidine residues with a 3'flanking guanine. Hydrolyzes poly(U) and poly(C) as substrates, and prefers the former. The S-lectins in frog eggs may be involved in the fertilization and development of the frog embryo. This lectin agglutinates various animal cells, including normal lymphocytes, erythrocytes, and fibroblasts of animal and human origin. It is cytotoxic against several tumor cells. This chain is Oocytes ribonuclease (RCR), found in Aquarana catesbeiana (American bullfrog).